We begin with the raw amino-acid sequence, 176 residues long: MAENRGERRAAVENRYDAWDHEQAMKAAVRKFISYDQFSAQLRNWREARLNIIEHATSVLSQVSNLGRTHFYSRTERFGGSSLVGDKLYVCLNETRMKTALNNIIVALQTVNGEGRARRLGPREASANTGGEDSALNVAHQLAEVDDLLTDESFLREAVFTQDKYELVNGLRWAGA.

Belongs to the virgaviridae capsid protein family.

The protein resides in the virion. Capsid protein self-assembles to form rod-shaped virions about 21 nm in diameter with a central canal enclosing the viral genomic RNA. The sequence is that of Capsid protein (CP) from Potato mop-top virus (isolate Potato/Sweden/Sw) (PMTV).